We begin with the raw amino-acid sequence, 162 residues long: Cyclic pyranopterin monophosphate synthase (162 aa).

Substrate-binding positions include 75 to 77 and 113 to 114; these read LCH and ME. The active site involves Asp-128.

Belongs to the MoaC family. In terms of assembly, homohexamer; trimer of dimers.

The catalysed reaction is (8S)-3',8-cyclo-7,8-dihydroguanosine 5'-triphosphate = cyclic pyranopterin phosphate + diphosphate. It functions in the pathway cofactor biosynthesis; molybdopterin biosynthesis. In terms of biological role, catalyzes the conversion of (8S)-3',8-cyclo-7,8-dihydroguanosine 5'-triphosphate to cyclic pyranopterin monophosphate (cPMP). The sequence is that of Cyclic pyranopterin monophosphate synthase from Burkholderia cenocepacia (strain HI2424).